A 260-amino-acid chain; its full sequence is Exosome complex component Rrp42 (260 aa).

The protein belongs to the RNase PH family. Rrp42 subfamily. In terms of assembly, component of the archaeal exosome complex. Forms a hexameric ring-like arrangement composed of 3 Rrp41-Rrp42 heterodimers. The hexameric ring associates with a trimer of Rrp4 and/or Csl4 subunits.

It localises to the cytoplasm. Non-catalytic component of the exosome, which is a complex involved in RNA degradation. Contributes to the structuring of the Rrp41 active site. The protein is Exosome complex component Rrp42 of Thermoplasma volcanium (strain ATCC 51530 / DSM 4299 / JCM 9571 / NBRC 15438 / GSS1).